The sequence spans 473 residues: MSVDAFSRESDDMMSLLDYDFIEGSSSDENAEVTEMETSAKTANNKNEVLFAPPCTQELLTERPSPDSKNSQGDDDSNSIYGNVIRDAQHSASRYATRCLDNAIPRKRLRLANLTVDSACISQTKRPHGTGNRKQYHRRNFPMSPTSQEKIHLRLHNRLGSRSEKQQRSLNYDRRLQEGHHRRRFYSERRIYDQNHSHHRTHDIRVPLEKYRVSRQHDLPVHEELNEILQREKHRLASISNECDFRVSSKNRWAAVLTFSSNAESTLCGPQITWEYLLHAGPELRNTFEIRPRISLQASAAREAVLRGESFIAALGSAEETLSWLKLHAVLKLRLVNHDPIFKTAGAVLDNLRLKLAPIMMCKYGTEKRSMGDMLRRSAPEDINDSLTLCLILLSRIRRVMHRTSGSKYSYMIDPRGCMIDYVPGECMTNILRYVDAHTRRCSDPACNLYISCTLMPIYIHGRYFYCNTLFGM.

Disordered regions lie at residues 57–81 (QELL…NSIY) and 123–143 (QTKR…NFPM). Zn(2+)-binding residues include cysteine 362, histidine 438, cysteine 442, and cysteine 447. A CHC2-type zinc finger spans residues 362–447 (CKYGTEKRSM…HTRRCSDPAC (86 aa)).

Belongs to the HHV-1 ICP27 protein family. Associates in a complex with RNA, and host export factors NXF1/TAP and ALYREF; these interactions allow nuclear export of viral transcripts.

It localises to the host cytoplasm. The protein localises to the host nucleus. Multifunctional regulator of the expression of viral genes that mediates nuclear export of viral intronless mRNAs. This immediate early (EI) protein promotes the nuclear export of viral intronless mRNAs by interacting with mRNAs and host NXF1/TAP. This is mRNA export factor ICP27 homolog from Gallus gallus (Chicken).